A 236-amino-acid polypeptide reads, in one-letter code: Rab-like protein 3 (236 aa).

The tract at residues 1–235 (MASLDRVKVL…GGGALKNFHC (235 aa)) is small GTPase-like. GTP contacts are provided by residues 16–21 (GVGKSS), 148–150 (KLD), and 179–180 (DC).

The protein belongs to the small GTPase superfamily. Rab family. In terms of assembly, homodimer. Interacts with GPR89; the interaction stabilizes GPR89. Interacts with RAP1GDS1.

In terms of biological role, required for KRAS signaling regulation and modulation of cell proliferation. Regulator of KRAS prenylation, and probably prenylation of other small GTPases. Required for lymphocyte development and function. Not required for myeloid cell development. The polypeptide is Rab-like protein 3 (Rabl3) (Mus musculus (Mouse)).